Consider the following 540-residue polypeptide: NADH-ubiquinone oxidoreductase chain 4 (540 aa).

The next 14 helical transmembrane spans lie at 2–22, 35–55, 89–109, 118–138, 140–160, 172–192, 218–238, 248–268, 282–302, 310–330, 338–358, 376–396, 415–435, and 501–521; these read TIIA…GVIL, IFIL…LIGC, ISAI…LISI, QKFQ…FAAT, LVQL…MIGV, FQIL…IGIL, LIFI…PLHL, PTAG…YGYI, YFPI…IATL, IVAY…FSGV, IILM…IGVI, VMPI…AFPI, IIIA…SFWL, and VNIF…IIGM.

Belongs to the complex I subunit 4 family.

The protein localises to the mitochondrion membrane. It carries out the reaction a ubiquinone + NADH + 5 H(+)(in) = a ubiquinol + NAD(+) + 4 H(+)(out). Functionally, core subunit of the mitochondrial membrane respiratory chain NADH dehydrogenase (Complex I) that is believed to belong to the minimal assembly required for catalysis. Complex I functions in the transfer of electrons from NADH to the respiratory chain. The immediate electron acceptor for the enzyme is believed to be ubiquinone. The protein is NADH-ubiquinone oxidoreductase chain 4 (nad4) of Dictyostelium discoideum (Social amoeba).